The chain runs to 439 residues: Xylose isomerase (439 aa).

Active-site residues include H101 and D104. Mg(2+)-binding residues include E232, E268, H271, D296, D307, D309, and D339.

Belongs to the xylose isomerase family. Homotetramer. Requires Mg(2+) as cofactor.

The protein localises to the cytoplasm. The enzyme catalyses alpha-D-xylose = alpha-D-xylulofuranose. This Histophilus somni (strain 2336) (Haemophilus somnus) protein is Xylose isomerase.